We begin with the raw amino-acid sequence, 288 residues long: MLCVRNSGECFRDHMRHMMRSLQDLKQIREPDDQSKCSYVTRARQKRIKQREQLSRLRISDVSDTSTYDSACCLASPLEEEEDQENHAERLAQGSPSSIKSLDFDSGYSEASWQDEGVVLRRTRNVRVSSSACVRTNRIRPKSTSDACLERWTSFEASDPTDWTTSLLTRGRNRQPLVLGDNSFADLIKNWMDLPECPDSAELKPSRKTAFLVNMRRKIAGISKGLEERRSAEAKRMSCPVGFQPPKPFFHQSHTSLHPMGTDFYQFSSVMKSGSRQPIICNDVIGYI.

The segment at 159–196 (DPTDWTTSLLTRGRNRQPLVLGDNSFADLIKNWMDLPE) is inka box.

The protein belongs to the INKA family.

The protein resides in the nucleus. In terms of biological role, inhibitor of the serine/threonine-protein kinase pak4/pak5. Acts by binding pak4/pak5 in a substrate-like manner, inhibiting the protein kinase activity. This Danio rerio (Zebrafish) protein is PAK4-inhibitor inka2.